Reading from the N-terminus, the 739-residue chain is Phosphoribosylformylglycinamidine synthase subunit PurL (739 aa).

His54 is a catalytic residue. ATP is bound by residues Tyr57 and Lys96. Glu98 provides a ligand contact to Mg(2+). Substrate contacts are provided by residues 99–102 and Arg121; that span reads SHNH. His100 functions as the Proton acceptor in the catalytic mechanism. Asp122 contributes to the Mg(2+) binding site. Position 245 (Gln245) interacts with substrate. Mg(2+) is bound at residue Asp273. 317–319 lines the substrate pocket; sequence ESQ. 2 residues coordinate ATP: Asp500 and Gly537. Asn538 provides a ligand contact to Mg(2+). Ser540 contributes to the substrate binding site.

It belongs to the FGAMS family. In terms of assembly, monomer. Part of the FGAM synthase complex composed of 1 PurL, 1 PurQ and 2 PurS subunits.

The protein localises to the cytoplasm. It catalyses the reaction N(2)-formyl-N(1)-(5-phospho-beta-D-ribosyl)glycinamide + L-glutamine + ATP + H2O = 2-formamido-N(1)-(5-O-phospho-beta-D-ribosyl)acetamidine + L-glutamate + ADP + phosphate + H(+). It functions in the pathway purine metabolism; IMP biosynthesis via de novo pathway; 5-amino-1-(5-phospho-D-ribosyl)imidazole from N(2)-formyl-N(1)-(5-phospho-D-ribosyl)glycinamide: step 1/2. Part of the phosphoribosylformylglycinamidine synthase complex involved in the purines biosynthetic pathway. Catalyzes the ATP-dependent conversion of formylglycinamide ribonucleotide (FGAR) and glutamine to yield formylglycinamidine ribonucleotide (FGAM) and glutamate. The FGAM synthase complex is composed of three subunits. PurQ produces an ammonia molecule by converting glutamine to glutamate. PurL transfers the ammonia molecule to FGAR to form FGAM in an ATP-dependent manner. PurS interacts with PurQ and PurL and is thought to assist in the transfer of the ammonia molecule from PurQ to PurL. In Bacillus cereus (strain ATCC 10987 / NRS 248), this protein is Phosphoribosylformylglycinamidine synthase subunit PurL.